Reading from the N-terminus, the 620-residue chain is Coenzyme F420-dependent sulfite reductase (620 aa).

Residues 6–35 enclose the 4Fe-4S ferredoxin-type 1 domain; the sequence is LNEIVDSGVCARCGTCTIVCPNGILTFDER. [4Fe-4S] cluster contacts are provided by Cys15, Cys18, Cys21, Cys25, Cys428, Cys434, Cys468, Cys472, Cys495, Cys498, Cys501, Cys505, Cys524, Cys527, Cys530, and Cys534. Cys472 provides a ligand contact to siroheme. 4Fe-4S ferredoxin-type domains are found at residues 486 to 515 and 520 to 544; these read KYPKVNEEKCNGCGRCAEVCKVEAIDIRGE and NYNVCVGCGKCIKNCPNEAREVKEE.

It belongs to the nitrite and sulfite reductase 4Fe-4S domain family. Requires [4Fe-4S] cluster as cofactor. The cofactor is siroheme.

It carries out the reaction 3 oxidized coenzyme F420-(gamma-L-Glu)(n) + hydrogen sulfide + 3 H2O + 2 H(+) = 3 reduced coenzyme F420-(gamma-L-Glu)(n) + sulfite. Functionally, catalyzes the reduction of sulfite to sulfide using reduced F420 as the electron source. Involved in sulfite detoxification and assimilation. Cannot use NADH or NADPH. The chain is Coenzyme F420-dependent sulfite reductase from Methanocaldococcus jannaschii (strain ATCC 43067 / DSM 2661 / JAL-1 / JCM 10045 / NBRC 100440) (Methanococcus jannaschii).